A 291-amino-acid polypeptide reads, in one-letter code: Ribonuclease Z (291 aa).

Residues histidine 61, histidine 63, aspartate 65, histidine 66, histidine 133, aspartate 201, and histidine 257 each coordinate Zn(2+). Catalysis depends on aspartate 65, which acts as the Proton acceptor.

It belongs to the RNase Z family. Homodimer. Zn(2+) serves as cofactor.

It catalyses the reaction Endonucleolytic cleavage of RNA, removing extra 3' nucleotides from tRNA precursor, generating 3' termini of tRNAs. A 3'-hydroxy group is left at the tRNA terminus and a 5'-phosphoryl group is left at the trailer molecule.. In terms of biological role, zinc phosphodiesterase, which displays some tRNA 3'-processing endonuclease activity. Probably involved in tRNA maturation, by removing a 3'-trailer from precursor tRNA. In Saccharolobus islandicus (strain M.16.27) (Sulfolobus islandicus), this protein is Ribonuclease Z.